A 100-amino-acid chain; its full sequence is Urease subunit gamma (100 aa).

It belongs to the urease gamma subunit family. In terms of assembly, heterotrimer of UreA (gamma), UreB (beta) and UreC (alpha) subunits. Three heterotrimers associate to form the active enzyme.

The protein localises to the cytoplasm. It carries out the reaction urea + 2 H2O + H(+) = hydrogencarbonate + 2 NH4(+). It functions in the pathway nitrogen metabolism; urea degradation; CO(2) and NH(3) from urea (urease route): step 1/1. This chain is Urease subunit gamma, found in Photorhabdus laumondii subsp. laumondii (strain DSM 15139 / CIP 105565 / TT01) (Photorhabdus luminescens subsp. laumondii).